The following is a 149-amino-acid chain: MSLQVNSVAIMLVVLILLGVLSNNNSITISALILLLMHQTFLGKYIPFLEKNGLKVGIIILTVGVLAPLVSGKVQLPAFKEFLNWQMFLSIVIGIAVAWFAGRGVNLMSSEPIVVTGLLIGTVLGVAFLGGIPVGPLIAAGILAVILGK.

4 helical membrane passes run 10-32, 56-76, 82-102, and 126-146; these read IMLVVLILLGVLSNNNSITISAL, VGIIILTVGVLAPLVSGKVQL, FLNWQMFLSIVIGIAVAWFAG, and VAFLGGIPVGPLIAAGILAVI.

The protein belongs to the UPF0756 family.

Its subcellular location is the cell membrane. The sequence is that of UPF0756 membrane protein MS1439 from Mannheimia succiniciproducens (strain KCTC 0769BP / MBEL55E).